The chain runs to 209 residues: Small ribosomal subunit protein uS4 (209 aa).

An S4 RNA-binding domain is found at 99–159; it reads SRLDSVCYRM…EKSKAQLRIK (61 aa).

This sequence belongs to the universal ribosomal protein uS4 family. In terms of assembly, part of the 30S ribosomal subunit. Contacts protein S5. The interaction surface between S4 and S5 is involved in control of translational fidelity.

Its function is as follows. One of the primary rRNA binding proteins, it binds directly to 16S rRNA where it nucleates assembly of the body of the 30S subunit. In terms of biological role, with S5 and S12 plays an important role in translational accuracy. This is Small ribosomal subunit protein uS4 from Thiobacillus denitrificans (strain ATCC 25259 / T1).